Consider the following 210-residue polypeptide: Large ribosomal subunit protein bL25 (210 aa).

The segment at 185 to 210 is disordered; sequence APEPAGQPEVPPEPAEEAKAKTIEKE. Residues 200–210 are compositionally biased toward basic and acidic residues; the sequence is EEAKAKTIEKE.

The protein belongs to the bacterial ribosomal protein bL25 family. CTC subfamily. Part of the 50S ribosomal subunit; part of the 5S rRNA/L5/L18/L25 subcomplex. Contacts the 5S rRNA. Binds to the 5S rRNA independently of L5 and L18.

Functionally, this is one of the proteins that binds to the 5S RNA in the ribosome where it forms part of the central protuberance. This is Large ribosomal subunit protein bL25 from Desulforamulus reducens (strain ATCC BAA-1160 / DSM 100696 / MI-1) (Desulfotomaculum reducens).